We begin with the raw amino-acid sequence, 371 residues long: Spermatogenic leucine zipper protein 1 (371 aa).

2 coiled-coil regions span residues 96-148 (EVSE…TVQD) and 177-289 (FPHI…QKEE). A Phosphoserine modification is found at Ser-98. Residues 110-120 (INKELVKKLLA) form a helix-loop-helix motif region. Positions 121 to 188 (SLDLGKKENA…HIQEENIRLR (68 aa)) are basic motif. A Phosphoserine modification is found at Ser-202. Over residues 223–240 (KTLKNNGTHSPTQTNNES) the composition is skewed to polar residues. A disordered region spans residues 223-246 (KTLKNNGTHSPTQTNNESAKQELE). Residues 245 to 266 (LEEQVKRLKEDTYSLHLIATLL) are leucine-zipper.

Post-translationally, phosphorylated by MAPK1/ERK2 and MAPK3/ERK1.

Its subcellular location is the cytoplasm. The protein resides in the nucleus. Functionally, transcription factor that binds to the DNA sequence 5'-CANNTG-3'(E box) and the G-box motif. May play an important role in the regulation of cell proliferation and differentiation during spermatogenesis. The polypeptide is Spermatogenic leucine zipper protein 1 (SPZ1) (Bos taurus (Bovine)).